Here is a 236-residue protein sequence, read N- to C-terminus: Small ribosomal subunit protein uS3 (236 aa).

The KH type-2 domain maps to 39–107; the sequence is IRLYVLEELK…ETSLNIVEIH (69 aa). The interval 216-236 is disordered; that stretch reads ERRAAEVDHSGSSSNRRRENA.

Belongs to the universal ribosomal protein uS3 family. In terms of assembly, part of the 30S ribosomal subunit. Forms a tight complex with proteins S10 and S14.

In terms of biological role, binds the lower part of the 30S subunit head. Binds mRNA in the 70S ribosome, positioning it for translation. In Bartonella henselae (strain ATCC 49882 / DSM 28221 / CCUG 30454 / Houston 1) (Rochalimaea henselae), this protein is Small ribosomal subunit protein uS3.